Reading from the N-terminus, the 360-residue chain is Protein Wnt-2 (360 aa).

A signal peptide spans 1–25; the sequence is MNAPLGGIWLGLPLLLTWLSPEVSS. 11 disulfide bridges follow: cysteine 76/cysteine 87, cysteine 127/cysteine 135, cysteine 137/cysteine 157, cysteine 206/cysteine 220, cysteine 208/cysteine 215, cysteine 278/cysteine 309, cysteine 294/cysteine 304, cysteine 308/cysteine 348, cysteine 324/cysteine 339, cysteine 326/cysteine 336, and cysteine 331/cysteine 332. The O-palmitoleoyl serine; by PORCN moiety is linked to residue serine 212. Asparagine 295 carries N-linked (GlcNAc...) asparagine glycosylation.

This sequence belongs to the Wnt family. Post-translationally, palmitoleoylation is required for efficient binding to frizzled receptors. Depalmitoleoylation leads to Wnt signaling pathway inhibition.

Its subcellular location is the secreted. The protein localises to the extracellular space. The protein resides in the extracellular matrix. In terms of biological role, ligand for members of the frizzled family of seven transmembrane receptors. Probable developmental protein. May be a signaling molecule which affects the development of discrete regions of tissues. Is likely to signal over only few cell diameters. The sequence is that of Protein Wnt-2 (WNT2) from Oryctolagus cuniculus (Rabbit).